Reading from the N-terminus, the 389-residue chain is Major outer membrane porin (389 aa).

Residues 1–23 form the signal peptide; the sequence is MKKLLKSALLSAAFAGSVGSLQA.

This sequence belongs to the chlamydial porin (CP) (TC 1.B.2) family. In terms of assembly, part of a disulfide cross-linked outer membrane complex (COMC) composed of the major outer membrane porin (MOMP), the small cysteine-rich protein (OmcA) and the large cysteine-rich periplasmic protein (OmcB).

It localises to the cell outer membrane. Its function is as follows. In elementary bodies (EBs, the infectious stage, which is able to survive outside the host cell) provides the structural integrity of the outer envelope through disulfide cross-links with the small cysteine-rich protein and the large cysteine-rich periplasmic protein. It has been described in publications as the Sarkosyl-insoluble COMC (Chlamydia outer membrane complex), and serves as the functional equivalent of peptidoglycan. Functionally, permits diffusion of specific solutes through the outer membrane. The chain is Major outer membrane porin (ompA) from Chlamydia pneumoniae (Chlamydophila pneumoniae).